Here is a 360-residue protein sequence, read N- to C-terminus: Phenylalanine--tRNA ligase alpha subunit (360 aa).

E260 lines the Mg(2+) pocket.

The protein belongs to the class-II aminoacyl-tRNA synthetase family. Phe-tRNA synthetase alpha subunit type 1 subfamily. Tetramer of two alpha and two beta subunits. Mg(2+) serves as cofactor.

The protein localises to the cytoplasm. The enzyme catalyses tRNA(Phe) + L-phenylalanine + ATP = L-phenylalanyl-tRNA(Phe) + AMP + diphosphate + H(+). This is Phenylalanine--tRNA ligase alpha subunit from Bartonella tribocorum (strain CIP 105476 / IBS 506).